The following is a 508-amino-acid chain: Protein adenylyltransferase fic-1 (508 aa).

A helical transmembrane segment spans residues 44–64 (TVIIISVLVSLICQHFVPYAV). TPR repeat units lie at residues 147-180 (AILA…APTN) and 181-214 (PQIL…DPGN). The Inhibitory (S/T)XXXE(G/N) motif motif lies at 270–275 (TVAIEG). Glutamate 274 serves as a coordination point for ATP. One can recognise a Fido domain in the interval 326 to 461 (ISIDDILEMH…LRPFVRYVAK (136 aa)). Threonine 352 carries the O-AMP-threonine; by autocatalysis modification. Position 357–360 (357–360 (VGRF)) interacts with ATP. Histidine 404 is a catalytic residue. ATP contacts are provided by residues 408 to 415 (DGNGRTAR), 440 to 441 (YY), and asparagine 448. Threonine 476 is subject to O-AMP-threonine; by autocatalysis. Residues 482–508 (LNSGDSKLTPEESEVSEKIEAECRAGN) form a disordered region. Residues 496-508 (VSEKIEAECRAGN) show a composition bias toward basic and acidic residues.

The protein belongs to the fic family. As to quaternary structure, forms homodimers; homodimerization might be required for adenylyltransferase activity. Ubiquitously expressed, with high expression in the germline.

It is found in the endoplasmic reticulum membrane. The protein localises to the nucleus membrane. The enzyme catalyses L-tyrosyl-[protein] + ATP = O-(5'-adenylyl)-L-tyrosyl-[protein] + diphosphate. It carries out the reaction L-threonyl-[protein] + ATP = 3-O-(5'-adenylyl)-L-threonyl-[protein] + diphosphate. The catalysed reaction is 3-O-(5'-adenylyl)-L-threonyl-[protein] + H2O = L-threonyl-[protein] + AMP + H(+). Its activity is regulated as follows. The side chain of Glu-274 determines which of the two opposing activities (AMPylase or de-AMPylase) will take place. In response to endoplasmic reticulum stress, mediates de-AMPylase activity. Adenylyltransferase activity is inhibited by the inhibitory helix present at the N-terminus: Glu-274 binds ATP and competes with ATP-binding at Arg-415, thereby preventing adenylyltransferase activity. In unstressed cells, disengagement of Glu-274 promotes adenylyltransferase activity. Activation dissociates ATP-binding from Glu-274, allowing ordered binding of the entire ATP moiety with the alpha-phosphate in an orientation that is productive for accepting an incoming target hydroxyl side chain. In terms of biological role, protein that can both mediate the addition of adenosine 5'-monophosphate (AMP) to specific residues of target proteins (AMPylation), and the removal of the same modification from target proteins (de-AMPylation), depending on the context. The side chain of Glu-274 determines which of the two opposing activities (AMPylase or de-AMPylase) will take place. Adenylyltransferase that mediates the addition of adenosine 5'-monophosphate (AMP) to specific residues of target proteins. In vivo target proteins include the heat-shock 70 family proteins hsp-1 and hsp-3 and the translation elongation factors eef-1A, eef-1G and eef-2. Can AMPylate core histone H3 in vitro. Can also act as a phosphodiesterase by mediating removal of ATP (de-AMPylation) from target proteins. Decreases susceptibility to P.aeruginosa-mediated killing and might therefore play a role in the innate immune response. In Caenorhabditis elegans, this protein is Protein adenylyltransferase fic-1.